A 358-amino-acid chain; its full sequence is CX3C chemokine receptor 1 (358 aa).

At 1 to 26 (MHTTLPESTSENFEYYDLAEACDMGD) the chain is on the extracellular side. A helical transmembrane segment spans residues 27–47 (IVALGTVFVVILYSLVFAFGL). Over 48-68 (VGNLLVVFALINSQRSKSITD) the chain is Cytoplasmic. A helical transmembrane segment spans residues 69–89 (IYLLNLALSDLLFVATLPFWT). Over 90-105 (HYVINEQGLHHATCKL) the chain is Extracellular. A disulfide bridge connects residues cysteine 103 and cysteine 176. The helical transmembrane segment at 106–126 (ITAFFFIGFFGGIFFITVISV) threads the bilayer. The Cytoplasmic portion of the chain corresponds to 127–147 (DRFLAIVLAANSMSNRTVQHG). Residues 148–168 (VTTSLGVWAAAILVATPQFMF) form a helical membrane-spanning segment. At 169–186 (TREKENECFGDYPEILQE) the chain is on the extracellular side. A helical membrane pass occupies residues 187–207 (IWPVILNTEINFLGFLLPLLI). Over 208-232 (MSYCYFRIMQTLFSCKNHKKAKAIR) the chain is Cytoplasmic. A helical transmembrane segment spans residues 233–253 (LIFLVVVVFFLFWTPYNVMIF). Residues 254–275 (LQTLNLYDFFPKCDVKRDLKLA) are Extracellular-facing. A helical transmembrane segment spans residues 276–296 (ISVTETIAFSHCCLNPLIYAF). Residues 297–358 (AGEKFRRYLY…TSDGDASILL (62 aa)) lie on the Cytoplasmic side of the membrane. Residue threonine 349 is modified to Phosphothreonine.

Belongs to the G-protein coupled receptor 1 family. As to quaternary structure, found in a ternary complex with CX3CL1 and ITGAV:ITGB3 or ITGA4:ITGB1. This protein is not N-glycosylated which is unusual for G-protein-coupled receptors.

It localises to the cell membrane. Its function is as follows. Receptor for the C-X3-C chemokine fractalkine (CX3CL1) present on many early leukocyte cells; CX3CR1-CX3CL1 signaling exerts distinct functions in different tissue compartments, such as immune response, inflammation, cell adhesion and chemotaxis. CX3CR1-CX3CL1 signaling mediates cell migratory functions. Responsible for the recruitment of natural killer (NK) cells to inflamed tissues. Acts as a regulator of inflammation process leading to atherogenesis by mediating macrophage and monocyte recruitment to inflamed atherosclerotic plaques, promoting cell survival. Involved in airway inflammation by promoting interleukin 2-producing T helper (Th2) cell survival in inflamed lung. Involved in the migration of circulating monocytes to non-inflamed tissues, where they differentiate into macrophages and dendritic cells. Acts as a negative regulator of angiogenesis, probably by promoting macrophage chemotaxis. Plays a key role in brain microglia by regulating inflammatory response in the central nervous system (CNS) and regulating synapse maturation. Required to restrain the microglial inflammatory response in the CNS and the resulting parenchymal damage in response to pathological stimuli. Involved in brain development by participating in synaptic pruning, a natural process during which brain microglia eliminates extra synapses during postnatal development. Synaptic pruning by microglia is required to promote the maturation of circuit connectivity during brain development. Acts as an important regulator of the gut microbiota by controlling immunity to intestinal bacteria and fungi. Expressed in lamina propria dendritic cells in the small intestine, which form transepithelial dendrites capable of taking up bacteria in order to provide defense against pathogenic bacteria. Required to initiate innate and adaptive immune responses against dissemination of commensal fungi (mycobiota) component of the gut: expressed in mononuclear phagocytes (MNPs) and acts by promoting induction of antifungal IgG antibodies response to confer protection against disseminated C.albicans or C.auris infection. Also acts as a receptor for C-C motif chemokine CCL26, inducing cell chemotaxis. The protein is CX3C chemokine receptor 1 of Bos taurus (Bovine).